The sequence spans 245 residues: Protein DEHYDRATION-INDUCED 19 homolog 4 (245 aa).

Belongs to the Di19 family.

In Oryza sativa subsp. japonica (Rice), this protein is Protein DEHYDRATION-INDUCED 19 homolog 4 (DI19-4).